Here is a 907-residue protein sequence, read N- to C-terminus: Coatomer subunit beta'-1 (907 aa).

9 WD repeats span residues 13–52 (QRSERVKSVDLHPTEPWILSSLYSGSVCIWDYQSQTMVKS), 55–94 (VSELPVRSAKFISRKQWVVAGADDMFIRVYNYNTMDKVKV), 97–136 (AHTDYIRCVAVHPTLPYVLSSSDDMLIKLWDWDKGWMCTQ), 140–180 (GHSH…PNFT), 183–224 (GHQK…CVQT), 227–266 (GHTHNISAVCFHPELPIIITGSEDGTVRIWHSTTYRLENT), 269–309 (YGLE…ASMD), 351–389 (SCDLYPQSLKHNPNGRFVVVCGDGEFIIYTALAWRNRSF), and 461–501 (RIDV…SYLE). Acidic residues-rich tracts occupy residues 850–866 (ETEDALDENGEPDEEVL) and 874–887 (STDEAVEVDADEPE). Residues 850 to 887 (ETEDALDENGEPDEEVLEENKVEESTDEAVEVDADEPE) are disordered.

Belongs to the WD repeat COPB2 family. In terms of assembly, oligomeric complex that consists of at least the alpha, beta, beta', gamma, delta, epsilon and zeta subunits.

The protein resides in the cytoplasm. It is found in the golgi apparatus membrane. Its subcellular location is the cytoplasmic vesicle. It localises to the COPI-coated vesicle membrane. In terms of biological role, the coatomer is a cytosolic protein complex that binds to dilysine motifs and reversibly associates with Golgi non-clathrin-coated vesicles, which further mediate biosynthetic protein transport from the ER, via the Golgi up to the trans Golgi network. Coatomer complex is required for budding from Golgi membranes, and is essential for the retrograde Golgi-to-ER transport of dilysine-tagged proteins. The chain is Coatomer subunit beta'-1 from Oryza sativa subsp. japonica (Rice).